The primary structure comprises 150 residues: Triosephosphate isomerase (150 aa).

Substrate contacts are provided by Asn-9 and Lys-11. Residue His-95 is the Electrophile of the active site.

Belongs to the triosephosphate isomerase family. In terms of assembly, homodimer.

The protein resides in the cytoplasm. It catalyses the reaction D-glyceraldehyde 3-phosphate = dihydroxyacetone phosphate. Its pathway is carbohydrate biosynthesis; gluconeogenesis. The protein operates within carbohydrate degradation; glycolysis; D-glyceraldehyde 3-phosphate from glycerone phosphate: step 1/1. The chain is Triosephosphate isomerase (tpiA) from Mycoplasmoides pirum (Mycoplasma pirum).